We begin with the raw amino-acid sequence, 440 residues long: 5-hydroxytryptamine receptor 6 (440 aa).

The Extracellular portion of the chain corresponds to 1-27; that stretch reads MVPEPGPVNSSTPAWGPGPPPAPGGSG. A glycan (N-linked (GlcNAc...) asparagine) is linked at asparagine 9. The chain crosses the membrane as a helical span at residues 28–52; the sequence is WVAAALCVVIVLTAAANSLLIALIC. Over 53 to 62 the chain is Cytoplasmic; the sequence is TQPALRNTSN. The chain crosses the membrane as a helical span at residues 63–88; that stretch reads FFLVSLFTSDLMVGLVVMPPAMLNAL. Over 89 to 96 the chain is Extracellular; the sequence is YGRWVLAR. A helical membrane pass occupies residues 97 to 122; that stretch reads GLCLLWTAFDVMCCSASILNLCLISL. The cysteines at positions 99 and 180 are disulfide-linked. Aspartate 106 contacts serotonin. Over 123–142 the chain is Cytoplasmic; the sequence is DRYLLILSPLRYKLRMTAPR. A helical transmembrane segment spans residues 143 to 167; that stretch reads ALALILGAWSLAALASFLPLLLGWH. Over 168-185 the chain is Extracellular; the sequence is ELGKARTSAPGQCRLLAS. The chain crosses the membrane as a helical span at residues 186–209; the sequence is LPYVLVASGVTFFLPSGAICFTYC. Over 210–268 the chain is Cytoplasmic; the sequence is RILLAARKQAVQVASLTTGTATAGQALETLQVPRTPRPGMESADSRRLTTKHSRKALKA. The chain crosses the membrane as a helical span at residues 269 to 295; sequence SLTLGILLSMFFVTWLPFFVASIAQAV. Over 296–301 the chain is Extracellular; it reads CDCISP. A helical membrane pass occupies residues 302-325; sequence GLFDVLTWLGYCNSTMNPIIYPLF. Topologically, residues 326 to 440 are cytoplasmic; sequence MRDFKRALGR…RQHPLGSPMN (115 aa).

The protein belongs to the G-protein coupled receptor 1 family. As to quaternary structure, interacts with CDK5. Interacts with MTOR. Interacts with RPTOR and NF1.

The protein resides in the cell membrane. In terms of biological role, G-protein coupled receptor for 5-hydroxytryptamine (serotonin), a biogenic hormone that functions as a neurotransmitter, a hormone and a mitogen. Also has a high affinity for tricyclic psychotropic drugs. Ligand binding causes a conformation change that triggers signaling via guanine nucleotide-binding proteins (G proteins) and modulates the activity of downstream effectors. HTR6 is coupled to G(s) G alpha proteins and mediates activation of adenylate cyclase activity. Controls pyramidal neurons migration during corticogenesis, through the regulation of CDK5 activity. Is an activator of mTOR signaling. This chain is 5-hydroxytryptamine receptor 6, found in Mus musculus (Mouse).